A 337-amino-acid chain; its full sequence is Anthranilate phosphoribosyltransferase (337 aa).

Residues Gly-81, 84-85, Ser-89, 91-94, 109-117, and Ala-121 each bind 5-phospho-alpha-D-ribose 1-diphosphate; these read GD, NVST, and KHGNRALSS. Anthranilate is bound at residue Gly-81. Ser-93 contributes to the Mg(2+) binding site. Asn-112 is a binding site for anthranilate. Arg-167 serves as a coordination point for anthranilate. Residues Asp-226 and Glu-227 each contribute to the Mg(2+) site.

Belongs to the anthranilate phosphoribosyltransferase family. In terms of assembly, homodimer. Requires Mg(2+) as cofactor.

The catalysed reaction is N-(5-phospho-beta-D-ribosyl)anthranilate + diphosphate = 5-phospho-alpha-D-ribose 1-diphosphate + anthranilate. Its pathway is amino-acid biosynthesis; L-tryptophan biosynthesis; L-tryptophan from chorismate: step 2/5. In terms of biological role, catalyzes the transfer of the phosphoribosyl group of 5-phosphorylribose-1-pyrophosphate (PRPP) to anthranilate to yield N-(5'-phosphoribosyl)-anthranilate (PRA). The sequence is that of Anthranilate phosphoribosyltransferase from Bradyrhizobium sp. (strain BTAi1 / ATCC BAA-1182).